A 418-amino-acid chain; its full sequence is Deubiquitinase and deneddylase Dub1 (418 aa).

Polar residues predominate over residues 1 to 10 (MLSPTNSISK). The interval 1–23 (MLSPTNSISKTVPAPPQDSSKPV) is disordered. A helical membrane pass occupies residues 40–60 (TALAVLLVVVTLGLILLFYSF). A disordered region spans residues 75–145 (STKEHPTISI…LPPKAPKPVK (71 aa)). The span at 86–141 (EPLPSPPLAVPRPSTPPPPVISRPSTPPAPTPAISPPSTPSAPKPSTPPPLPPKAP) shows a compositional bias: pro residues. Catalysis depends on residues histidine 288, aspartate 305, and cysteine 358.

It belongs to the peptidase C48 family.

It is found in the secreted. The protein resides in the host cell. It localises to the membrane. Functionally, effector proteins function to alter host cell physiology and promote bacterial survival in host tissues. This protease possesses deubiquitinating and deneddylating activities. The sequence is that of Deubiquitinase and deneddylase Dub1 (cdu1) from Chlamydia trachomatis serovar A (strain ATCC VR-571B / DSM 19440 / HAR-13).